Reading from the N-terminus, the 238-residue chain is Ribosomal RNA small subunit methyltransferase G (238 aa).

S-adenosyl-L-methionine is bound by residues glycine 78, phenylalanine 83, 129–130 (AE), and arginine 148. A disordered region spans residues 216-238 (EKKKETPKKYPRKAGTPAKNPIK).

It belongs to the methyltransferase superfamily. RNA methyltransferase RsmG family.

It localises to the cytoplasm. Specifically methylates the N7 position of a guanine in 16S rRNA. The polypeptide is Ribosomal RNA small subunit methyltransferase G (Lactococcus lactis subsp. lactis (strain IL1403) (Streptococcus lactis)).